We begin with the raw amino-acid sequence, 240 residues long: UDP-2,3-diacylglucosamine hydrolase (240 aa).

Residues aspartate 7, histidine 9, aspartate 40, asparagine 78, and histidine 113 each contribute to the Mn(2+) site. 78 to 79 provides a ligand contact to substrate; the sequence is NR. The substrate site is built by aspartate 121, serine 159, lysine 166, and histidine 194. Residues histidine 194 and histidine 196 each coordinate Mn(2+).

This sequence belongs to the LpxH family. Mn(2+) serves as cofactor.

The protein resides in the cell inner membrane. The catalysed reaction is UDP-2-N,3-O-bis[(3R)-3-hydroxytetradecanoyl]-alpha-D-glucosamine + H2O = 2-N,3-O-bis[(3R)-3-hydroxytetradecanoyl]-alpha-D-glucosaminyl 1-phosphate + UMP + 2 H(+). It functions in the pathway glycolipid biosynthesis; lipid IV(A) biosynthesis; lipid IV(A) from (3R)-3-hydroxytetradecanoyl-[acyl-carrier-protein] and UDP-N-acetyl-alpha-D-glucosamine: step 4/6. Hydrolyzes the pyrophosphate bond of UDP-2,3-diacylglucosamine to yield 2,3-diacylglucosamine 1-phosphate (lipid X) and UMP by catalyzing the attack of water at the alpha-P atom. Involved in the biosynthesis of lipid A, a phosphorylated glycolipid that anchors the lipopolysaccharide to the outer membrane of the cell. The chain is UDP-2,3-diacylglucosamine hydrolase from Pseudomonas putida (strain ATCC 47054 / DSM 6125 / CFBP 8728 / NCIMB 11950 / KT2440).